A 39-amino-acid chain; its full sequence is MTRTAVLLLTLLFLVAMAASDKIKTRELCWTEEECENWE.

The signal sequence occupies residues 1-20; the sequence is MTRTAVLLLTLLFLVAMAAS. A disulfide bond links Cys-29 and Cys-35.

Expressed by the venom duct.

Its subcellular location is the secreted. Its function is as follows. Probable neurotoxin. This chain is Contryphan-Cal2, found in Californiconus californicus (California cone).